Consider the following 125-residue polypeptide: Cyclic diguanosine monophosphate-binding protein PA4608 (125 aa).

6–13 (DERRRFHR) provides a ligand contact to 3',3'-c-di-GMP. Positions 7-103 (ERRRFHRIAF…SISHLRRLVE (97 aa)) constitute a PilZ domain. The RXXXR motif; surrounds the surface of the c-di-GMP binding site motif lies at 9–13 (RRFHR). Residues 35–40 (DVSLHG) carry the DXSXXG motif; surrounds the surface of the c-di-GMP binding site motif. Residue tryptophan 77 coordinates 3',3'-c-di-GMP.

Monomer in both c-di-GMP-bound and free forms.

Its function is as follows. Binds the second messenger bis-(3'-5') cyclic dimeric guanosine monophosphate (c-di-GMP). Can bind two c-di-GMP molecules per monomer. May play a role in bacterial second-messenger regulated processes. Binding to c-di-GMP induces a conformational change of the C- and N-termini resulting in the exposure of a highly negative surface on one side of the protein to a possible effector protein. This chain is Cyclic diguanosine monophosphate-binding protein PA4608, found in Pseudomonas aeruginosa (strain ATCC 15692 / DSM 22644 / CIP 104116 / JCM 14847 / LMG 12228 / 1C / PRS 101 / PAO1).